A 131-amino-acid chain; its full sequence is D-ribose pyranase (131 aa).

The active-site Proton donor is the histidine 20. Substrate-binding positions include aspartate 28, histidine 98, and tyrosine 120 to asparagine 122.

The protein belongs to the RbsD / FucU family. RbsD subfamily. In terms of assembly, homodecamer.

Its subcellular location is the cytoplasm. The enzyme catalyses beta-D-ribopyranose = beta-D-ribofuranose. It functions in the pathway carbohydrate metabolism; D-ribose degradation; D-ribose 5-phosphate from beta-D-ribopyranose: step 1/2. Catalyzes the interconversion of beta-pyran and beta-furan forms of D-ribose. The chain is D-ribose pyranase from Bacillus cereus (strain ATCC 10987 / NRS 248).